Consider the following 199-residue polypeptide: Dephospho-CoA kinase (199 aa).

A DPCK domain is found at 3–199 (TLGVTGGIGS…ELYWAVTGGQ (197 aa)). 11–16 (GSGKTT) serves as a coordination point for ATP.

This sequence belongs to the CoaE family.

The protein resides in the cytoplasm. It catalyses the reaction 3'-dephospho-CoA + ATP = ADP + CoA + H(+). It participates in cofactor biosynthesis; coenzyme A biosynthesis; CoA from (R)-pantothenate: step 5/5. Functionally, catalyzes the phosphorylation of the 3'-hydroxyl group of dephosphocoenzyme A to form coenzyme A. This chain is Dephospho-CoA kinase, found in Salinibacter ruber (strain DSM 13855 / M31).